The following is a 309-amino-acid chain: Foldase protein PrsA 2 (309 aa).

A signal peptide spans Met1–Ala22. The N-palmitoyl cysteine moiety is linked to residue Cys23. Cys23 carries S-diacylglycerol cysteine lipidation. Positions Thr146 to Lys241 constitute a PpiC domain.

The protein belongs to the PrsA family.

The protein localises to the cell membrane. The enzyme catalyses [protein]-peptidylproline (omega=180) = [protein]-peptidylproline (omega=0). In terms of biological role, plays a major role in protein secretion by helping the post-translocational extracellular folding of several secreted proteins. The sequence is that of Foldase protein PrsA 2 (prsA2) from Streptococcus pyogenes serotype M3 (strain ATCC BAA-595 / MGAS315).